The primary structure comprises 310 residues: Thymidine kinase (310 aa).

17 to 24 contributes to the ATP binding site; the sequence is GPFGIGKT. E45 serves as the catalytic Proton acceptor. Position 86 (Q86) interacts with substrate. R176 is a binding site for ATP. R182 lines the substrate pocket.

Belongs to the herpesviridae thymidine kinase family. As to quaternary structure, homodimer.

The catalysed reaction is thymidine + ATP = dTMP + ADP + H(+). Catalyzes the transfer of the gamma-phospho group of ATP to thymidine to generate dTMP in the salvage pathway of pyrimidine synthesis. The dTMP serves as a substrate for DNA polymerase during viral DNA replication. Allows the virus to be reactivated and to grow in non-proliferative cells lacking a high concentration of phosphorylated nucleic acid precursors. The protein is Thymidine kinase of Gallus gallus (Chicken).